We begin with the raw amino-acid sequence, 378 residues long: MKILVDENMPYARELFSRLGEVKAVPGRPIPVEELNHADALMVRSVTKVNESLLSGTPINFVGTATAGTDHVDEAWLKQAGIGFSAAPGCNAIAVVEYVFSALLMLAERDGFSLRDRTIGIVGVGNVGSRLQTRLEALGIRTLLCDPPRAARGDEGDFRTLDELVQEADVLTFHTPLYKDGPYKTLHLADETLIRRLKPGAILINACRGPVVDNAALLARLNAGQPLSVVLDVWEGEPDLNVALLEAVDIGTSHIAGYTLEGKARGTTQVFEAYSAFIGREQHVALETLLPAPEFGRITLHGPLDQPTLKRLAHLVYDVRRDDAPLRKVAGIPGEFDKLRKNYLERREWSSLYVMCDDETAAALLCKLGFNAVHHPAH.

Positions 45 and 66 each coordinate substrate. Positions 146 and 175 each coordinate NAD(+). R208 is an active-site residue. D232 provides a ligand contact to NAD(+). Residue E237 is part of the active site. The active-site Proton donor is H254. An NAD(+)-binding site is contributed by G257. A substrate-binding site is contributed by Y258.

The protein belongs to the D-isomer specific 2-hydroxyacid dehydrogenase family. PdxB subfamily. In terms of assembly, homodimer.

It is found in the cytoplasm. The enzyme catalyses 4-phospho-D-erythronate + NAD(+) = (R)-3-hydroxy-2-oxo-4-phosphooxybutanoate + NADH + H(+). It participates in cofactor biosynthesis; pyridoxine 5'-phosphate biosynthesis; pyridoxine 5'-phosphate from D-erythrose 4-phosphate: step 2/5. Catalyzes the oxidation of erythronate-4-phosphate to 3-hydroxy-2-oxo-4-phosphonooxybutanoate. This Salmonella dublin (strain CT_02021853) protein is Erythronate-4-phosphate dehydrogenase.